A 167-amino-acid polypeptide reads, in one-letter code: Ubiquitin-fold modifier-conjugating enzyme 1 (167 aa).

Residue C116 is the Glycyl thioester intermediate of the active site.

The protein belongs to the ubiquitin-conjugating enzyme family. UFC1 subfamily. In terms of assembly, interacts with UBA5 (via C-terminus). Interacts with UFL1. Interacts with UFM1.

Functionally, E2-like enzyme which specifically catalyzes the second step in ufmylation. Accepts the ubiquitin-like modifier UFM1 from the E1 enzyme UBA5 and forms an intermediate with UFM1 via a thioester linkage. Ufmylation is involved in various processes, such as ribosome recycling, response to DNA damage, interferon response or reticulophagy (also called ER-phagy). The protein is Ubiquitin-fold modifier-conjugating enzyme 1 of Salmo salar (Atlantic salmon).